A 499-amino-acid polypeptide reads, in one-letter code: uncharacterized protein (499 aa).

This is an uncharacterized protein from Metamycoplasma hominis (strain ATCC 23114 / DSM 25592 / NBRC 14850 / NCTC 10111 / PG21) (Mycoplasma hominis).